Consider the following 273-residue polypeptide: Structural protein ORF273 (273 aa).

Its subcellular location is the virion. In Acidianus convivator (ATV), this protein is Structural protein ORF273.